The chain runs to 454 residues: 3-phosphoshikimate 1-carboxyvinyltransferase (454 aa).

The 3-phosphoshikimate site is built by K39, S40, and R44. K39 is a phosphoenolpyruvate binding site. Residues G112 and R140 each coordinate phosphoenolpyruvate. 3-phosphoshikimate-binding residues include S185, Q187, D333, and K360. Phosphoenolpyruvate is bound at residue Q187. D333 serves as the catalytic Proton acceptor. The phosphoenolpyruvate site is built by R364 and R405.

The protein belongs to the EPSP synthase family. As to quaternary structure, monomer.

The protein localises to the cytoplasm. The catalysed reaction is 3-phosphoshikimate + phosphoenolpyruvate = 5-O-(1-carboxyvinyl)-3-phosphoshikimate + phosphate. It functions in the pathway metabolic intermediate biosynthesis; chorismate biosynthesis; chorismate from D-erythrose 4-phosphate and phosphoenolpyruvate: step 6/7. Its function is as follows. Catalyzes the transfer of the enolpyruvyl moiety of phosphoenolpyruvate (PEP) to the 5-hydroxyl of shikimate-3-phosphate (S3P) to produce enolpyruvyl shikimate-3-phosphate and inorganic phosphate. The protein is 3-phosphoshikimate 1-carboxyvinyltransferase of Xylella fastidiosa (strain Temecula1 / ATCC 700964).